Here is a 991-residue protein sequence, read N- to C-terminus: Collagenase ColT (991 aa).

Residues 1 to 28 (MKKKFIKMLCSIAIGCMISTSYSIKVSA) form the signal peptide. Positions 29–52 (FSNGNTKTNPNGEFKSLSLNSTNP) are excised as a propeptide. The interval 53-727 (YKTKYSFNDL…VYDIVFHGLL (675 aa)) is S1 metalloprotease domain, degrades FALGPA (furylacryloyl-Leu-Gly-Pro-Ala). Positions 57 to 330 (YSFNDLNKLS…AIEAIKEDFN (274 aa)) are activator domain. The segment at 340 to 611 (DINKLIEEGK…MENLVNNYDN (272 aa)) is catalytic subdomain. Ca(2+) is bound at residue Glu440. His465 is a binding site for Zn(2+). The active site involves Glu466. His469 contacts Zn(2+). Ca(2+) contacts are provided by Gly473, Ile477, and Gly479. Glu499 provides a ligand contact to Zn(2+). Positions 619 to 731 (DDYMKQYDNK…VFHGLLSHNK (113 aa)) are helper subdomain. Collagen-binding domain regions lie at residues 755–870 (IYEK…NISD) and 878–991 (IKKI…VIIN). Ca(2+)-binding residues include Glu757, Glu759, Asn761, Asp784, Asp787, Glu883, Glu885, Asn887, Asp888, Asp910, and Asp913.

The protein belongs to the peptidase M9B family. Collagenase subfamily. Ca(2+) is required as a cofactor. The cofactor is Zn(2+).

The protein localises to the secreted. It carries out the reaction Digestion of native collagen in the triple helical region at Xaa-|-Gly bonds. With synthetic peptides, a preference is shown for Gly at P3 and P1', Pro and Ala at P2 and P2', and hydroxyproline, Ala or Arg at P3'.. Partially inhibited by 1-10-phenanthroline; inactivation is irreversible. Partially inhibited by EDTA; inactivation is reversible. Inhibited by broad-spectrum zinc metalloprotease inhibitor batimastat. N-aryl mercaptoacetamide-based inhibitors have been isolated that act on clostridial collagenases with submicromolar affinity while having negligibile activity on human collagenases. Clostridial collagenases are among the most efficient degraders of eukaryotic collagen known; saprophytes use collagen as a carbon source while pathogens additionally digest collagen to aid in host colonization. Has both tripeptidylcarboxypeptidase on Gly-X-Y and endopeptidase activities; the endopeptidase cuts within the triple helix region of collagen while tripeptidylcarboxypeptidase successively digests the exposed ends, thus clostridial collagenases can digest large sections of collagen. The activator domain (residues 57-330) and catalytic subdomain (340-611) open and close around substrate allowing digestion when the protein is closed. The polypeptide is Collagenase ColT (Clostridium tetani (strain Massachusetts / E88)).